Here is a 55-residue protein sequence, read N- to C-terminus: ATP synthase protein 8 (55 aa).

The helical transmembrane segment at 6–26 (PHPWFAILVFSWIFFLVILPK) threads the bilayer.

Belongs to the ATPase protein 8 family. As to quaternary structure, F-type ATPases have 2 components, CF(1) - the catalytic core - and CF(0) - the membrane proton channel.

Its subcellular location is the mitochondrion membrane. Functionally, mitochondrial membrane ATP synthase (F(1)F(0) ATP synthase or Complex V) produces ATP from ADP in the presence of a proton gradient across the membrane which is generated by electron transport complexes of the respiratory chain. F-type ATPases consist of two structural domains, F(1) - containing the extramembraneous catalytic core and F(0) - containing the membrane proton channel, linked together by a central stalk and a peripheral stalk. During catalysis, ATP synthesis in the catalytic domain of F(1) is coupled via a rotary mechanism of the central stalk subunits to proton translocation. Part of the complex F(0) domain. Minor subunit located with subunit a in the membrane. The sequence is that of ATP synthase protein 8 (MT-ATP8) from Squalus acanthias (Spiny dogfish).